Reading from the N-terminus, the 433-residue chain is Oxaloacetate decarboxylase beta chain 2 (433 aa).

10 helical membrane passes run 16 to 36 (LGAG…LAIA), 42 to 62 (LLLL…AGMA), 122 to 142 (VLAL…VIFM), 168 to 188 (FGIF…LIAF), 190 to 210 (LPQA…AIYL), 216 to 236 (PELL…VPLI), 266 to 286 (ILFP…AAPL), 311 to 331 (NGLI…KLVA), 340 to 360 (LGIL…GVLM), and 413 to 433 (VAGV…VLAM).

Belongs to the GcdB/MmdB/OadB family. In terms of assembly, heterotrimer of an alpha, a beta and a gamma subunit. It depends on Na(+) as a cofactor.

The protein localises to the cell membrane. The catalysed reaction is oxaloacetate + 2 Na(+)(in) + H(+) = pyruvate + 2 Na(+)(out) + CO2. Functionally, catalyzes the decarboxylation of oxaloacetate coupled to Na(+) translocation. The polypeptide is Oxaloacetate decarboxylase beta chain 2 (oadB2) (Salmonella typhi).